A 415-amino-acid polypeptide reads, in one-letter code: Mannosylglycerate hydrolase (415 aa).

Residues Tyr23, 27–30 (WLWD), Tyr76, Gln98, and Gly158 contribute to the substrate site. The active-site Proton donor is Asp160. Residues Arg193 and 344-345 (YW) contribute to the substrate site. The Proton acceptor role is filled by Glu388.

This sequence belongs to the glycosyl hydrolase 63 family. Homotetramer in solution.

The enzyme catalyses (2R)-2-O-(alpha-D-mannosyl)-glycerate + H2O = D-mannose + (R)-glycerate. It catalyses the reaction (2R)-2-O-(alpha-D-glucopyranosyl)-glycerate + H2O = (R)-glycerate + D-glucose. Its activity is regulated as follows. Activity is not stimulated by divalent cations and not affected in the presence of EDTA. In terms of biological role, hydrolase that catalyzes the hydrolysis of mannosylglycerate (MG), a solute produced in response to osmotic stress in thermophiles, into mannose and glycerate. Can also hydrolyze glucosylglycerate (GG) to glucose and glycerate, with similar catalytic efficiency. Is highly specific for MG and GG, and cannot use mannosylglyceramide (MGA), glucosylglycerol, mannosylglucosylglycerate (MGG), glucosylglucosylglycerate (GGG) or trehalose as substrates. This chain is Mannosylglycerate hydrolase, found in Thermus thermophilus (strain ATCC BAA-163 / DSM 7039 / HB27).